A 201-amino-acid polypeptide reads, in one-letter code: Ribonuclease HII (201 aa).

The region spanning 10 to 200 is the RNase H type-2 domain; it reads LIEAGCDEAG…LGDGQLELFS (191 aa). A divalent metal cation-binding residues include Asp-16, Glu-17, and Asp-108.

This sequence belongs to the RNase HII family. Mn(2+) serves as cofactor. Mg(2+) is required as a cofactor.

The protein localises to the cytoplasm. The catalysed reaction is Endonucleolytic cleavage to 5'-phosphomonoester.. Its function is as follows. Endonuclease that specifically degrades the RNA of RNA-DNA hybrids. In Bacteroides fragilis (strain ATCC 25285 / DSM 2151 / CCUG 4856 / JCM 11019 / LMG 10263 / NCTC 9343 / Onslow / VPI 2553 / EN-2), this protein is Ribonuclease HII.